A 247-amino-acid chain; its full sequence is 3-deoxy-manno-octulosonate cytidylyltransferase (247 aa).

It belongs to the KdsB family.

The protein localises to the cytoplasm. The catalysed reaction is 3-deoxy-alpha-D-manno-oct-2-ulosonate + CTP = CMP-3-deoxy-beta-D-manno-octulosonate + diphosphate. Its pathway is nucleotide-sugar biosynthesis; CMP-3-deoxy-D-manno-octulosonate biosynthesis; CMP-3-deoxy-D-manno-octulosonate from 3-deoxy-D-manno-octulosonate and CTP: step 1/1. The protein operates within bacterial outer membrane biogenesis; lipopolysaccharide biosynthesis. Its function is as follows. Activates KDO (a required 8-carbon sugar) for incorporation into bacterial lipopolysaccharide in Gram-negative bacteria. The chain is 3-deoxy-manno-octulosonate cytidylyltransferase from Methylobacterium radiotolerans (strain ATCC 27329 / DSM 1819 / JCM 2831 / NBRC 15690 / NCIMB 10815 / 0-1).